Reading from the N-terminus, the 465-residue chain is GTPase Der (465 aa).

2 EngA-type G domains span residues proline 3 to glycine 167 and valine 179 to threonine 352. Residues glycine 9–serine 16, aspartate 57–isoleucine 61, asparagine 119–aspartate 122, glycine 185–serine 192, aspartate 232–leucine 236, and asparagine 297–aspartate 300 contribute to the GTP site. The KH-like domain occupies histidine 353–alanine 437.

Belongs to the TRAFAC class TrmE-Era-EngA-EngB-Septin-like GTPase superfamily. EngA (Der) GTPase family. Associates with the 50S ribosomal subunit.

Its function is as follows. GTPase that plays an essential role in the late steps of ribosome biogenesis. In Xanthomonas axonopodis pv. citri (strain 306), this protein is GTPase Der.